Here is an 852-residue protein sequence, read N- to C-terminus: Glutamine--tRNA ligase (852 aa).

The tract at residues 1–42 (MGAFGWEQDRGAPFSGRSPRILTRMTDAPRPTAGADAPARPP) is disordered. A glutaminyl-tRNA synthetase region spans residues 1 to 635 (MGAFGWEQDR…ITLKDTWGKQ (635 aa)). A compositionally biased stretch (low complexity) spans 28–38 (APRPTAGADAP). A 'HIGH' region motif is present at residues 74–84 (PDPSGYAHLGH). L-glutamine-binding residues include aspartate 107 and tyrosine 252. The 'KMSKS' region motif lies at 308 to 312 (ITSKR). 2 disordered regions span residues 533-562 (EGEN…TAPV) and 632-681 (WGKQ…LTPE). The gatB-like stretch occupies residues 636–852 (GGGTQQKAEG…LAAALKDALA (217 aa)). The segment covering 664–675 (SSSPAKAHAPKA) has biased composition (low complexity).

In the N-terminal section; belongs to the class-I aminoacyl-tRNA synthetase family. It in the C-terminal section; belongs to the GatB/GatE family. In terms of assembly, monomer.

It localises to the cytoplasm. It catalyses the reaction tRNA(Gln) + L-glutamine + ATP = L-glutaminyl-tRNA(Gln) + AMP + diphosphate. This is Glutamine--tRNA ligase from Deinococcus radiodurans (strain ATCC 13939 / DSM 20539 / JCM 16871 / CCUG 27074 / LMG 4051 / NBRC 15346 / NCIMB 9279 / VKM B-1422 / R1).